Consider the following 597-residue polypeptide: Elongation factor 4 (597 aa).

The tr-type G domain maps to 2-184 (KNIRNFSIIA…EIVAKIPAPT (183 aa)). GTP-binding positions include 14-19 (DHGKST) and 131-134 (NKID).

Belongs to the TRAFAC class translation factor GTPase superfamily. Classic translation factor GTPase family. LepA subfamily.

It localises to the cell inner membrane. The enzyme catalyses GTP + H2O = GDP + phosphate + H(+). In terms of biological role, required for accurate and efficient protein synthesis under certain stress conditions. May act as a fidelity factor of the translation reaction, by catalyzing a one-codon backward translocation of tRNAs on improperly translocated ribosomes. Back-translocation proceeds from a post-translocation (POST) complex to a pre-translocation (PRE) complex, thus giving elongation factor G a second chance to translocate the tRNAs correctly. Binds to ribosomes in a GTP-dependent manner. The protein is Elongation factor 4 of Neisseria meningitidis serogroup C / serotype 2a (strain ATCC 700532 / DSM 15464 / FAM18).